A 439-amino-acid chain; its full sequence is Dolichyl-diphosphooligosaccharide--protein glycosyltransferase 48 kDa subunit (439 aa).

Positions M1–S26 are cleaved as a signal peptide. Residues G27–P410 are Lumenal-facing. A helical transmembrane segment spans residues Y411–L430. Residues H431–D439 are Cytoplasmic-facing.

The protein belongs to the DDOST 48 kDa subunit family. Component of the oligosaccharyltransferase (OST) complex. OST exists in two different complex forms which contain common core subunits RPN1, RPN2, OST48, OST4, DAD1 and TMEM258, either STT3A or STT3B as catalytic subunits, and form-specific accessory subunits. STT3A complex assembly occurs through the formation of 3 subcomplexes. Subcomplex 1 contains RPN1 and TMEM258, subcomplex 2 contains the STT3A-specific subunits STT3A, DC2/OSTC, and KCP2 as well as the core subunit OST4, and subcomplex 3 contains RPN2, DAD1, and OST48. The STT3A complex can form stable complexes with the Sec61 complex or with both the Sec61 and TRAP complexes. Interacts with SMIM22.

Its subcellular location is the endoplasmic reticulum membrane. It functions in the pathway protein modification; protein glycosylation. Functionally, subunit of the oligosaccharyl transferase (OST) complex that catalyzes the initial transfer of a defined glycan (Glc(3)Man(9)GlcNAc(2) in eukaryotes) from the lipid carrier dolichol-pyrophosphate to an asparagine residue within an Asn-X-Ser/Thr consensus motif in nascent polypeptide chains, the first step in protein N-glycosylation. N-glycosylation occurs cotranslationally and the complex associates with the Sec61 complex at the channel-forming translocon complex that mediates protein translocation across the endoplasmic reticulum (ER). All subunits are required for a maximal enzyme activity. Required for the assembly of both SST3A- and SS3B-containing OST complexes. The protein is Dolichyl-diphosphooligosaccharide--protein glycosyltransferase 48 kDa subunit of Pongo abelii (Sumatran orangutan).